Consider the following 119-residue polypeptide: Methylglyoxal synthase (119 aa).

The MGS-like domain maps to 1–119 (MKIALIAHDK…ESAKLIMADI (119 aa)). Substrate-binding positions include His-8, Lys-12, 34–37 (TGTT), and 54–55 (SG). Residue Asp-60 is the Proton donor/acceptor of the active site. His-87 is a substrate binding site.

It belongs to the methylglyoxal synthase family.

It carries out the reaction dihydroxyacetone phosphate = methylglyoxal + phosphate. Functionally, catalyzes the formation of methylglyoxal from dihydroxyacetone phosphate. This Clostridium perfringens (strain ATCC 13124 / DSM 756 / JCM 1290 / NCIMB 6125 / NCTC 8237 / Type A) protein is Methylglyoxal synthase.